Here is a 305-residue protein sequence, read N- to C-terminus: Membrane glycoprotein UL142 (305 aa).

The N-terminal stretch at 1-19 (MRIEWACWLFGYFVSSVGS) is a signal peptide. Over 20-270 (ERSLSYRYHL…QKTNNTTSPW (251 aa)) the chain is Lumenal. Residues 271 to 288 (VYAIPMGATATIGAGLYI) traverse the membrane as a helical segment. Over 289-305 (GKHFTPVKFVYEVWRGQ) the chain is Cytoplasmic.

In terms of assembly, interacts with host MICA and ULBP3.

Its subcellular location is the host endoplasmic reticulum membrane. It localises to the host Golgi apparatus membrane. Participates in the inhibition of the host immune response. Prevents host NK cell-mediated lysis of the infected cell by preventing the KLRK1 ligand 3/ULBP3 trafficking to the cell surface. Also retains another KLRK1 ligand, MHC class I-related chain A/MICA, in the Golgi apparatus to avoid its surface expression. The chain is Membrane glycoprotein UL142 (UL142) from Homo sapiens (Human).